A 123-amino-acid polypeptide reads, in one-letter code: Ribosome-binding factor A (123 aa).

This sequence belongs to the RbfA family. As to quaternary structure, monomer. Binds 30S ribosomal subunits, but not 50S ribosomal subunits or 70S ribosomes.

The protein resides in the cytoplasm. Functionally, one of several proteins that assist in the late maturation steps of the functional core of the 30S ribosomal subunit. Associates with free 30S ribosomal subunits (but not with 30S subunits that are part of 70S ribosomes or polysomes). Required for efficient processing of 16S rRNA. May interact with the 5'-terminal helix region of 16S rRNA. This chain is Ribosome-binding factor A, found in Desulfatibacillum aliphaticivorans.